The following is a 364-amino-acid chain: Developmentally-regulated GTP-binding protein 2 (364 aa).

At K21 the chain carries (3S)-3-hydroxylysine. The OBG-type G domain occupies 63 to 288 (ARVALIGFPS…LLEMLWEYLA (226 aa)). Residues 69–76 (GFPSVGKS), 94–98 (FTTLT), 115–118 (DLPG), 246–249 (NKID), and 269–271 (SCG) each bind GTP. 2 residues coordinate Mg(2+): S76 and T96. Residues 288–363 (ALTCIYTKKR…EHEDVIQIVK (76 aa)) enclose the TGS domain.

This sequence belongs to the TRAFAC class OBG-HflX-like GTPase superfamily. OBG GTPase family. As to quaternary structure, interacts with RWDD1; this interaction confers protection to polyubiquitination and proteolytic degradation. Interacts with JMJD7; this interaction is direct. Requires Mg(2+) as cofactor. Post-translationally, polyubiquitinated. Hydroxylated (with S stereochemistry) at C-3 of Lys-21 by JMJD7. Fairly high levels in liver, heart, kidney, and brain. Very low levels in lung, spleen, testis and skeletal muscle.

It localises to the nucleus. Its subcellular location is the cytoplasm. It catalyses the reaction GTP + H2O = GDP + phosphate + H(+). Functionally, catalyzes the conversion of GTP to GDP through hydrolysis of the gamma-phosphate bond in GTP. When hydroxylated at C-3 of 'Lys-21' by JMJD7, may bind to RNA and play a role in translation. The sequence is that of Developmentally-regulated GTP-binding protein 2 (Drg2) from Mus musculus (Mouse).